The chain runs to 287 residues: Oxaloacetate decarboxylase (287 aa).

Residue Ser-50 participates in substrate binding. Mg(2+) is bound at residue Asp-88. Arg-159 and His-235 together coordinate substrate.

It belongs to the isocitrate lyase/PEP mutase superfamily. Oxaloacetate decarboxylase family. Homotetramer; dimer of dimers. Mg(2+) serves as cofactor.

It catalyses the reaction oxaloacetate + H(+) = pyruvate + CO2. In terms of biological role, catalyzes the decarboxylation of oxaloacetate into pyruvate. Seems to play a role in maintaining cellular concentrations of bicarbonate and pyruvate. The sequence is that of Oxaloacetate decarboxylase from Pseudomonas paraeruginosa (strain DSM 24068 / PA7) (Pseudomonas aeruginosa (strain PA7)).